Consider the following 488-residue polypeptide: GlcNAc-binding protein A (488 aa).

Residues 1–24 (MIMIITKKTLLPVTLALFSSGVMA) form the signal peptide. The region spanning 25 to 202 (HGYVSSVEGG…SFYNVIDVMF (178 aa)) is the Chitin-binding type-4 domain. One can recognise a Chitin-binding type-3 domain in the interval 439-480 (AGSKVLATDGRIYECKPFPYSGYCIQWSPSATQFEPGVGSDW).

Belongs to the GbpA family.

It localises to the secreted. Probably interacts with GlcNAc residues. May promote attachment to both epithelial cell surfaces and chitin. The chain is GlcNAc-binding protein A from Photobacterium profundum (strain SS9).